The primary structure comprises 461 residues: uncharacterized protein (461 aa).

The next 2 helical transmembrane spans lie at 18 to 38 and 124 to 144; these read IITWLLVILPFPILGTLFLIY and FIFLEYFIIAEGLMWGEILSI. PLD phosphodiesterase domains lie at 197–224 and 374–401; these read YNYRDHRKILVIDNKVAFNGGINLADEY and TPGFVHAKVFIADDIKAVVGTINLDYRS.

Belongs to the phospholipase D family. Cardiolipin synthase subfamily.

The protein resides in the cell membrane. This is an uncharacterized protein from Streptococcus mutans serotype c (strain ATCC 700610 / UA159).